Here is a 603-residue protein sequence, read N- to C-terminus: Polypeptide N-acetylgalactosaminyltransferase 10 (603 aa).

Residues 1–11 (MRRKEKRLLQA) are Cytoplasmic-facing. The chain crosses the membrane as a helical; Signal-anchor for type II membrane protein span at residues 12-31 (VALALAALVLLPNVGLWALY). At 32–603 (RERQPDGSPG…STVLENFNRN (572 aa)) the chain is on the lumenal side. Residues asparagine 124 and asparagine 146 are each glycosylated (N-linked (GlcNAc...) asparagine). 5 disulfide bridges follow: cysteine 135-cysteine 365, cysteine 356-cysteine 432, cysteine 471-cysteine 488, cysteine 523-cysteine 538, and cysteine 563-cysteine 578. The segment at 144–253 (LPNTSIIIPF…VNWLPPLLDR (110 aa)) is catalytic subdomain A. Substrate-binding residues include aspartate 185 and arginine 214. Aspartate 237 is a Mn(2+) binding site. Serine 238 provides a ligand contact to substrate. Histidine 239 is a binding site for Mn(2+). The tract at residues 311 to 373 (PFESPVMAGG…PCSRVGHIYR (63 aa)) is catalytic subdomain B. Tryptophan 342 lines the substrate pocket. Histidine 370 contacts Mn(2+). Substrate-binding residues include arginine 373 and tyrosine 378. Residues 373–384 (RKYVPYKVPAGV) form a flexible loop region. One can recognise a Ricin B-type lectin domain in the interval 458–590 (AAWGEIRNVG…SSLTQQWLFE (133 aa)). Asparagine 593 carries an N-linked (GlcNAc...) asparagine glycan.

This sequence belongs to the glycosyltransferase 2 family. GalNAc-T subfamily. Requires Mn(2+) as cofactor. As to expression, highly expressed in the sublingual gland, testis, small intestine, colon and ovary. Expressed at intermediate level in heart, brain, spleen, lung, stomach, cervix and uterus.

The protein localises to the golgi apparatus membrane. The enzyme catalyses L-seryl-[protein] + UDP-N-acetyl-alpha-D-galactosamine = a 3-O-[N-acetyl-alpha-D-galactosaminyl]-L-seryl-[protein] + UDP + H(+). It carries out the reaction L-threonyl-[protein] + UDP-N-acetyl-alpha-D-galactosamine = a 3-O-[N-acetyl-alpha-D-galactosaminyl]-L-threonyl-[protein] + UDP + H(+). The protein operates within protein modification; protein glycosylation. In terms of biological role, catalyzes the initial reaction in O-linked oligosaccharide biosynthesis, the transfer of an N-acetyl-D-galactosamine residue to a serine or threonine residue on the protein receptor. Has activity toward Muc5Ac and EA2 peptide substrates. The protein is Polypeptide N-acetylgalactosaminyltransferase 10 (Galnt10) of Rattus norvegicus (Rat).